A 122-amino-acid chain; its full sequence is Large ribosomal subunit protein uL14 (122 aa).

The protein belongs to the universal ribosomal protein uL14 family. Part of the 50S ribosomal subunit. Forms a cluster with proteins L3 and L19. In the 70S ribosome, L14 and L19 interact and together make contacts with the 16S rRNA in bridges B5 and B8.

Functionally, binds to 23S rRNA. Forms part of two intersubunit bridges in the 70S ribosome. The polypeptide is Large ribosomal subunit protein uL14 (Burkholderia multivorans (strain ATCC 17616 / 249)).